The following is a 414-amino-acid chain: Transcription factor FAMA (414 aa).

Disordered regions lie at residues 1–61 (MDKD…TPFD) and 142–197 (KEDQ…SQRM). Composition is skewed to low complexity over residues 12–24 (GESS…NSSG) and 35–49 (QQQQ…QQHQ). Residues 166 to 175 (RENKNVTKKE) are compositionally biased toward basic and acidic residues. Residues 176 to 185 (VKSKRKRART) show a composition bias toward basic residues. The segment covering 187-197 (KTSEEVESQRM) has biased composition (basic and acidic residues). Residues 194–245 (SQRMTHIAVERNRRKQMNEHLRVLRSLMPGSYVQRGDQASIIGGAIEFVREL) enclose the bHLH domain. The LxCxE motif motif lies at 249-253 (LQCLE).

In terms of assembly, interacts with FAMA through its LxCxE motif. Self-interacts. Also interacts with bHLH071 and bHLH093. Interacts with RBR1. In terms of tissue distribution, resctricted to stomatal cell lineages (at protein level). Expressed in roots, leaves, stems, and flowers.

It is found in the nucleus. Functionally, transcription activator. Together with MYB88 and MYB124, ensures that stomata contain just two guard cells (GCs) by enforcing a single symmetric precursor cell division before stomatal maturity. Together with SPCH and MUTE, regulates the stomata formation. Required to promote differentiation and morphogenesis of stomatal guard cells and to halt proliferative divisions in their immediate precursors. Mediates the formation of stomata. Prevents histone H3K27me3 marks and derepresses stem cell gene expression. This Arabidopsis thaliana (Mouse-ear cress) protein is Transcription factor FAMA (FAMA).